Reading from the N-terminus, the 520-residue chain is Nonsense-mediated mRNA decay factor SMG9 (520 aa).

Disordered stretches follow at residues 1-94 and 107-143; these read MSES…PAPL and GKGP…QRPT. At serine 2 the chain carries N-acetylserine. Residues serine 2, serine 4, serine 7, serine 32, and serine 53 each carry the phosphoserine modification. The segment covering 36 to 53 has biased composition (basic and acidic residues); sequence GRERDYIAPWERERRDGS. Pro residues predominate over residues 78 to 94; it reads QPPPSTAPAAPPAPAPL. Low complexity predominate over residues 112-121; the sequence is AATGASTPEG. Positions 122-133 are enriched in pro residues; the sequence is TAPPPPTAPAPP. Residue serine 451 is modified to Phosphoserine.

It belongs to the SMG9 family. As to quaternary structure, self-associates to form homodimers and forms heterodimers with SMG8; these assembly forms may represent SMG1C intermediate forms. Component of the SMG1C complex composed of SMG1, SMG8 and SMG9. Interacts with DHX34; the interaction is RNA-independent. Phosphorylated by SMG1.

Functionally, involved in nonsense-mediated decay (NMD) of mRNAs containing premature stop codons. Is recruited by release factors to stalled ribosomes together with SMG1 and SMG8 (forming the SMG1C protein kinase complex) and, in the SMG1C complex, is required for the efficient association between SMG1 and SMG8. Plays a role in brain, heart, and eye development. In Rattus norvegicus (Rat), this protein is Nonsense-mediated mRNA decay factor SMG9.